The following is a 445-amino-acid chain: uncharacterized protein (445 aa).

8 helical membrane-spanning segments follow: residues 16–36, 52–72, 98–118, 168–188, 219–239, 243–263, 283–303, and 366–386; these read IVSLGVTASSFLFINGVAFLI, LLASMPSWGLVVTMFAWGYLL, VHSLLWIGVFLFLGGMAAGGC, GLMFPAVVCTLAAVASVLGIV, ASALLMMPQTVTVTFMLVWLI, GWSVAQAGVLVTISQLLGALG, LIAAAAAATLFLLAAVDNEGS, and AAYPTAWALCGVFPLAAVPLV. Residues 417-445 are disordered; that stretch reads AWPNGPRRPGPPGQPRRVRQGGTAITPPT.

Belongs to the major facilitator superfamily.

The protein resides in the cell membrane. This is an uncharacterized protein from Mycobacterium tuberculosis (strain ATCC 25618 / H37Rv).